The chain runs to 224 residues: LexA repressor (224 aa).

The segment at residues 31–51 is a DNA-binding region (H-T-H motif); sequence RAEIAAELGFKSANAAEEHLQ. Catalysis depends on for autocatalytic cleavage activity residues Ser142 and Lys179.

It belongs to the peptidase S24 family. As to quaternary structure, homodimer.

The catalysed reaction is Hydrolysis of Ala-|-Gly bond in repressor LexA.. In terms of biological role, represses a number of genes involved in the response to DNA damage (SOS response), including recA and lexA. In the presence of single-stranded DNA, RecA interacts with LexA causing an autocatalytic cleavage which disrupts the DNA-binding part of LexA, leading to derepression of the SOS regulon and eventually DNA repair. The sequence is that of LexA repressor from Verminephrobacter eiseniae (strain EF01-2).